We begin with the raw amino-acid sequence, 353 residues long: Photosystem II protein D1 (353 aa).

The residue at position 2 (Thr2) is an N-acetylthreonine. Residue Thr2 is modified to Phosphothreonine. A run of 3 helical transmembrane segments spans residues 29–46, 118–133, and 142–156; these read YIGW…TATS, HFLL…EWEL, and WIAV…AATA. His118 provides a ligand contact to chlorophyll a. Residue Tyr126 coordinates pheophytin a. Residues Asp170 and Glu189 each contribute to the [CaMn4O5] cluster site. Residues 197–218 form a helical membrane-spanning segment; the sequence is FHMLGVAGVFGGSLFSAMHGSL. His198 is a binding site for chlorophyll a. Residues His215 and 264 to 265 each bind a quinone; that span reads SF. Fe cation is bound at residue His215. His272 lines the Fe cation pocket. The chain crosses the membrane as a helical span at residues 274–288; the sequence is FLAAWPVVGIWFTAL. [CaMn4O5] cluster contacts are provided by His332, Glu333, Asp342, and Ala344. The propeptide occupies 345–353; that stretch reads AIEAPSTNG.

Belongs to the reaction center PufL/M/PsbA/D family. PSII is composed of 1 copy each of membrane proteins PsbA, PsbB, PsbC, PsbD, PsbE, PsbF, PsbH, PsbI, PsbJ, PsbK, PsbL, PsbM, PsbT, PsbX, PsbY, PsbZ, Psb30/Ycf12, at least 3 peripheral proteins of the oxygen-evolving complex and a large number of cofactors. It forms dimeric complexes. The D1/D2 heterodimer binds P680, chlorophylls that are the primary electron donor of PSII, and subsequent electron acceptors. It shares a non-heme iron and each subunit binds pheophytin, quinone, additional chlorophylls, carotenoids and lipids. D1 provides most of the ligands for the Mn4-Ca-O5 cluster of the oxygen-evolving complex (OEC). There is also a Cl(-1) ion associated with D1 and D2, which is required for oxygen evolution. The PSII complex binds additional chlorophylls, carotenoids and specific lipids. is required as a cofactor. Tyr-161 forms a radical intermediate that is referred to as redox-active TyrZ, YZ or Y-Z. Post-translationally, C-terminally processed by CTPA; processing is essential to allow assembly of the oxygen-evolving complex and thus photosynthetic growth.

The protein resides in the plastid. The protein localises to the chloroplast thylakoid membrane. It catalyses the reaction 2 a plastoquinone + 4 hnu + 2 H2O = 2 a plastoquinol + O2. Functionally, photosystem II (PSII) is a light-driven water:plastoquinone oxidoreductase that uses light energy to abstract electrons from H(2)O, generating O(2) and a proton gradient subsequently used for ATP formation. It consists of a core antenna complex that captures photons, and an electron transfer chain that converts photonic excitation into a charge separation. The D1/D2 (PsbA/PsbD) reaction center heterodimer binds P680, the primary electron donor of PSII as well as several subsequent electron acceptors. The chain is Photosystem II protein D1 from Petunia hybrida (Petunia).